Here is an 843-residue protein sequence, read N- to C-terminus: MSVGRLWSGLLLLLLFFCSRSSSCGLSTHVEIGHRALQFLQLQDGRINYKELLLEHQDAYQAGTVFPDAFYPSICKQGKFHEVSESTHWTPFLNASIHYIRENYPLPWEKDTEKLVAFLFGVTSHMVADVSWHSLGIEQGFLRTMGAIDFYDSYSEAHSAGDFGGDVLSQFEFNFNYLSRRWYVPIQDLLRIYDNLYGRKVITKNVIVDCTYLQFLEMHGEMLAVSKLYSTYSTKSPFLVEQFQDYFLGGLDDMAFWSTNIYRLTSFMLENGTSDCNLPENPLFISCDGRKNHTLSSSKVQKNDFHRNLTMFISKDIRKNLNYTERGVFYSTGSWAPESVTFMYQTLERNLRMMFTGNSQTALKHVSSPSASYTLSVPYARLGWVMASADLNQDGHGDLVVGAPGYSHPGRFQIGRVYIIYGNDLGLPPIDLDLDKEAHGVLEGFQPSGRFGSALAVLDFNKDGLPDLAVGAPSVGSGQLTYNGSVYVYYGSQQGRLSSSPNITISCKDTYCNLGWALLAADADGDGQHDLVISSPFAPGGGKQRGIVAAFYSHPRRNDKESLTLDEADWKVNGEEDFSWFGYSLHGVTVANRSLLLIGSPTWKNISRMARSSHQKNQEKKSLGRVYGYFPPNRQREITISGDKAMGKLGTSLSSGYVRVNGTLTQVLLVGAPTHDDVSKMAFLTMTLHHGGATRMYELAPEKTQPALFSTFSGDRRFSRFGSVLHLTDLDDDGLDEIIMAAPLRITDVTSGLLGEEDGRVYIYNGMHTTLGDVTGKCKSWMTPCPEEKAQYVLISPEASSRFGSSLVSVRSKERNQVVVAAGRSSWGARLSGALHVYSFSSD.

The signal sequence occupies residues 1 to 23 (MSVGRLWSGLLLLLLFFCSRSSS). N-linked (GlcNAc...) asparagine glycosylation is found at Asn94, Asn271, Asn292, Asn308, and Asn322. 7 FG-GAP repeats span residues 368 to 429 (SPSA…GLPP), 435 to 498 (DKEA…GRLS), 500 to 560 (SPNI…RNDK), 564 to 625 (TLDE…SLGR), 635 to 695 (QREI…GATR), 707 to 773 (ALFS…TLGD), and 791 to 843 (QYVL…FSSD). N-linked (GlcNAc...) asparagine glycosylation is found at Asn483, Asn502, Asn592, Asn605, and Asn661.

It belongs to the GPLD1 family. As to quaternary structure, monomer. Post-translationally, glycosylated.

Its subcellular location is the secreted. The enzyme catalyses a 6-(alpha-D-glucosaminyl)-1-(1,2-diacyl-sn-glycero-3-phospho)-1D-myo-inositol + H2O = 6-(alpha-D-glucosaminyl)-1D-myo-inositol + a 1,2-diacyl-sn-glycero-3-phosphate + H(+). In terms of biological role, this protein hydrolyzes the inositol phosphate linkage in proteins anchored by phosphatidylinositol glycans (GPI-anchor) thus releasing these proteins from the membrane. The protein is Phosphatidylinositol-glycan-specific phospholipase D (Gpld1) of Rattus norvegicus (Rat).